The following is a 405-amino-acid chain: N-methyltransferase nanE (405 aa).

S-adenosyl-L-methionine-binding positions include 238-239 (GG), aspartate 261, and 290-291 (HH).

It belongs to the class I-like SAM-binding methyltransferase superfamily. Cation-independent O-methyltransferase family.

It participates in secondary metabolite biosynthesis. N-methyltransferase; part of the gene cluster that mediates the biosynthesis of the benzazepine alkaloid nanangelenin A which contains an unprecedented 3,4-dihydro-1-benzazepine-2,5-dione-N-prenyl-N-acetoxy-anthranilamide scaffold. The first step of nanangelenin biosynthesis is catalyzed by the indoleamine 2,3-dioxygenase nanC which produces N-formyl-kynurenine through the catabolism of tryptophan. The two-module NRPS nanA then utilizes anthranilate (Ant) and L-kynurenine (L-Kyn) to assemble the dipeptide product nanangelenin B. The first adenylation domain of nanA (A1) loads anthranilate onto the T1 domain, while A2 loads kynurenine, generated through spontaneous nonenzymatic deformylation of the nanC-supplied N-formyl-kynurenine. The peptide bond formation between the tethered amino acids is catalyzed by the first condensation domain (C1) between anthranilate's carbonyl carbon and kynurenine's aliphatic primary amine. The second C domain (C2) catalyzes the final cyclization event between the aromatic amine of kynurenine and the tethered carbonyl carbon, yielding nanangelenin B. The terminal T3 domain enhances the catalytic efficiency of C2, suggesting the T2-tethered Ant-L-Kyn is transferred to T3 prior to cyclization by C2. Once released from nanA, nanangelenin B is then prenylated by the prenyltransferase nanD to form nanangelenin C. Nanangelenin C is then N-hydroxylated by the FAD-dependent monooxygenase nanF and further acetylated by the acetyltransferase nanB to yield nanangelenin F. Finally, the N-methyltransferase nanE methylates the amide nitrogen of 1-benzazepine to convert nanangelenin F into nanangelenin A. NanE is also able to methylate most of the intermediates of the pathway such as nanangelenin B and nanangelenin C to produce nanangelenin D and nanangelenin E, respectively. This Aspergillus nanangensis protein is N-methyltransferase nanE.